The chain runs to 138 residues: Large ribosomal subunit protein uL16 (138 aa).

The span at Met-1–Thr-16 shows a compositional bias: basic residues. The interval Met-1–Gly-23 is disordered.

This sequence belongs to the universal ribosomal protein uL16 family. In terms of assembly, part of the 50S ribosomal subunit.

Binds 23S rRNA and is also seen to make contacts with the A and possibly P site tRNAs. In Corynebacterium glutamicum (strain R), this protein is Large ribosomal subunit protein uL16.